The sequence spans 41 residues: Cytochrome b559 subunit beta (41 aa).

Residues 16–32 (WLAIHALAVPTVFFLGS) traverse the membrane as a helical segment. H20 contributes to the heme binding site.

It belongs to the PsbE/PsbF family. In terms of assembly, heterodimer of an alpha subunit and a beta subunit. PSII is composed of 1 copy each of membrane proteins PsbA, PsbB, PsbC, PsbD, PsbE, PsbF, PsbH, PsbI, PsbJ, PsbK, PsbL, PsbM, PsbT, PsbX, PsbY, PsbZ, Psb30/Ycf12, at least 3 peripheral proteins of the oxygen-evolving complex and a large number of cofactors. It forms dimeric complexes. The cofactor is heme b.

The protein resides in the plastid. The protein localises to the chloroplast thylakoid membrane. In terms of biological role, this b-type cytochrome is tightly associated with the reaction center of photosystem II (PSII). PSII is a light-driven water:plastoquinone oxidoreductase that uses light energy to abstract electrons from H(2)O, generating O(2) and a proton gradient subsequently used for ATP formation. It consists of a core antenna complex that captures photons, and an electron transfer chain that converts photonic excitation into a charge separation. This is Cytochrome b559 subunit beta from Oltmannsiellopsis viridis (Marine flagellate).